We begin with the raw amino-acid sequence, 230 residues long: Type II restriction enzyme Eco47I (230 aa).

The enzyme catalyses Endonucleolytic cleavage of DNA to give specific double-stranded fragments with terminal 5'-phosphates.. A P subtype restriction enzyme that recognizes the double-stranded sequence 5'-GGWCC-3' and cleaves after G-1. This Escherichia coli protein is Type II restriction enzyme Eco47I.